A 185-amino-acid chain; its full sequence is TATA-box-binding protein 2 (185 aa).

Tandem repeats lie at residues 7–84 and 100–178.

This sequence belongs to the TBP family.

General factor that plays a role in the activation of archaeal genes transcribed by RNA polymerase. Binds specifically to the TATA box promoter element which lies close to the position of transcription initiation. The polypeptide is TATA-box-binding protein 2 (Methanosarcina acetivorans (strain ATCC 35395 / DSM 2834 / JCM 12185 / C2A)).